The primary structure comprises 288 residues: Solute carrier family 25 member 45 (288 aa).

Solcar repeat units follow at residues 1 to 83 (MPVE…TLLV), 97 to 191 (PSYM…LCRQ), and 199 to 286 (PSSA…LLRW). Helical transmembrane passes span 6-26 (FVAGWISGALGLVLGHPFDTV), 63-83 (IASIAVVNSVLFGVYSNTLLV), 100-120 (MHIFLAGCTGGFLQAYCLAPF), 166-186 (GAWALTLRDTPTVGIYFITYE), 202-222 (ATVLVAGGFAGIASWVAATPL), and 266-286 (SARAFPVNAVTFLSYEYLLRW).

This sequence belongs to the mitochondrial carrier (TC 2.A.29) family.

It localises to the mitochondrion inner membrane. This chain is Solute carrier family 25 member 45 (SLC25A45), found in Homo sapiens (Human).